A 211-amino-acid polypeptide reads, in one-letter code: Dual specificity protein phosphatase 26 (211 aa).

The Tyrosine-protein phosphatase domain maps to 60-207; it reads NHADEVWPGL…LLALDRRLRQ (148 aa). The active-site Phosphocysteine intermediate is Cys-152.

The protein belongs to the protein-tyrosine phosphatase family. Non-receptor class dual specificity subfamily. In terms of assembly, interacts with HSF4.

It is found in the cytoplasm. Its subcellular location is the nucleus. The protein resides in the golgi apparatus. It carries out the reaction O-phospho-L-tyrosyl-[protein] + H2O = L-tyrosyl-[protein] + phosphate. The enzyme catalyses O-phospho-L-seryl-[protein] + H2O = L-seryl-[protein] + phosphate. The catalysed reaction is O-phospho-L-threonyl-[protein] + H2O = L-threonyl-[protein] + phosphate. Its function is as follows. Inactivates MAPK1 and MAPK3 which leads to dephosphorylation of heat shock factor protein 4 and a reduction in its DNA-binding activity. The sequence is that of Dual specificity protein phosphatase 26 (Dusp26) from Rattus norvegicus (Rat).